The chain runs to 202 residues: Small ribosomal subunit protein uS4 (202 aa).

Over residues 1 to 13 the composition is skewed to basic residues; it reads MSRYRGPRLRVTR. A disordered region spans residues 1–42; that stretch reads MSRYRGPRLRVTRRLGELPGLTRKASKKSNPPGQHGQARRKR. One can recognise an S4 RNA-binding domain in the interval 90-152; the sequence is NRLDNVCFRL…KASKKLVEGN (63 aa).

It belongs to the universal ribosomal protein uS4 family. Part of the 30S ribosomal subunit. Contacts protein S5. The interaction surface between S4 and S5 is involved in control of translational fidelity.

Its function is as follows. One of the primary rRNA binding proteins, it binds directly to 16S rRNA where it nucleates assembly of the body of the 30S subunit. In terms of biological role, with S5 and S12 plays an important role in translational accuracy. The protein is Small ribosomal subunit protein uS4 of Prochlorococcus marinus (strain MIT 9515).